Consider the following 578-residue polypeptide: Glutamate--tRNA ligase (578 aa).

The 'HIGH' region motif lies at 97 to 107; sequence PNPDFVIHLGN.

The protein belongs to the class-I aminoacyl-tRNA synthetase family. Glutamate--tRNA ligase type 2 subfamily.

The protein resides in the cytoplasm. It catalyses the reaction tRNA(Glu) + L-glutamate + ATP = L-glutamyl-tRNA(Glu) + AMP + diphosphate. Its function is as follows. Catalyzes the attachment of glutamate to tRNA(Glu) in a two-step reaction: glutamate is first activated by ATP to form Glu-AMP and then transferred to the acceptor end of tRNA(Glu). In Hyperthermus butylicus (strain DSM 5456 / JCM 9403 / PLM1-5), this protein is Glutamate--tRNA ligase.